The following is a 580-amino-acid chain: Pentatricopeptide repeat-containing protein At5g10690 (580 aa).

9 PPR repeats span residues 76-110 (NTIVMNSVLEACVHCGNIDLALRMFHEMAEPGGIG), 112-142 (DSISYATILKGLGKARRIDEAFQMLETIEYG), 151-181 (SSSLIYGLLDALINAGDLRRANGLLARYDIL), 189-223 (SVLIYNLLMKGYVNSESPQAAINLLDEMLRLRLEP), 224-254 (DRLTYNTLIHACIKCGDLDAAMKFFNDMKEK), 266-296 (DVVTYTTLVKGFGDATDLLSLQEIFLEMKLC), 302-337 (DRTAFTAVVDAMLKCGSTSGALCVFGEILKRSGANE), 342-376 (KPHLYLSMMRAFAVQGDYGMVRNLYLRLWPDSSGS), and 382-417 (QQEADNLLMEAALNDGQLDEALGILLSIVRRWKTIP). The region spanning 486–553 (VPIVDDRGSC…IVVHCGNFSG (68 aa)) is the CBS domain.

It belongs to the PPR family. P subfamily.

This is Pentatricopeptide repeat-containing protein At5g10690 (CBSPPR1) from Arabidopsis thaliana (Mouse-ear cress).